Here is a 71-residue protein sequence, read N- to C-terminus: UPF0434 protein Meso_3270 (71 aa).

It belongs to the UPF0434 family.

The sequence is that of UPF0434 protein Meso_3270 from Chelativorans sp. (strain BNC1).